The following is a 161-amino-acid chain: Nucleotide-binding protein Mmc1_1670 (161 aa).

This sequence belongs to the YajQ family.

Nucleotide-binding protein. The sequence is that of Nucleotide-binding protein Mmc1_1670 from Magnetococcus marinus (strain ATCC BAA-1437 / JCM 17883 / MC-1).